The sequence spans 133 residues: UPF0292 protein TGAM_1777 (133 aa).

In terms of domain architecture, Toprim spans 20–100; that stretch reads EGALIVEGLR…RVDVETRREL (81 aa). Positions 26, 69, and 71 each coordinate Mg(2+).

The protein belongs to the UPF0292 family. The cofactor is Mg(2+).

In Thermococcus gammatolerans (strain DSM 15229 / JCM 11827 / EJ3), this protein is UPF0292 protein TGAM_1777.